Here is a 295-residue protein sequence, read N- to C-terminus: Voltage-gated potassium channel (295 aa).

Residues 1–38 are Cytoplasmic-facing; it reads MSVERWVFPGCSVMARFRRGLSDLGGRVRNIGDVMEHP. The helical transmembrane segment at 39-63 threads the bilayer; the sequence is LVELGVSYAALLSVIVVVVEYTMQL. The Extracellular portion of the chain corresponds to 64–67; sequence SGEY. Residues 68 to 92 traverse the membrane as a helical segment; it reads LVRLYLVDLILVIILWADYAYRAYK. At 93 to 96 the chain is on the cytoplasmic side; it reads SGDP. Positions 97–105 form an intramembrane region, helical; that stretch reads AGYVKKTLY. Residues 106–108 are Extracellular-facing; it reads EIP. A helical; Voltage-sensor membrane pass occupies residues 109–125; it reads ALVPAGLLALIEGHLAG. Topologically, residues 126–128 are cytoplasmic; that stretch reads LGL. A helical; Voltage-sensor transmembrane segment spans residues 129–145; sequence FRLVRLLRFLRILLIIS. The Cytoplasmic segment spans residues 146–159; that stretch reads RGSKFLSAIADAAD. The helical transmembrane segment at 160–184 threads the bilayer; it reads KIRFYHLFGAVMLTVLYGAFAIYIV. Over 185–195 the chain is Extracellular; it reads EYPDPNSSIKS. Residues 196–208 constitute an intramembrane region (pore-forming); that stretch reads VFDALWWAVVTAT. The Selectivity filter signature appears at 209–214; it reads TVGYGD. At 209-221 the chain is on the extracellular side; sequence TVGYGDVVPATPI. A helical transmembrane segment spans residues 222-253; it reads GKVIGIAVMLTGISALTLLIGTVSNMFQKILV. Residues 254–295 lie on the Cytoplasmic side of the membrane; sequence GEPEPSCSPAKLAEMVSSMSEEEFEEFVRTLKNLRRLENSMK.

This sequence belongs to the potassium channel family.

Its subcellular location is the cell membrane. Mediates a strong voltage-dependent potassium ion permeability of excitable membranes. Assuming opened or closed conformations in response to the voltage difference across the membrane, the protein forms a potassium-selective channel through which potassium ions may pass in accordance with their electrochemical gradient. In Aeropyrum pernix (strain ATCC 700893 / DSM 11879 / JCM 9820 / NBRC 100138 / K1), this protein is Voltage-gated potassium channel.